Here is a 30-residue protein sequence, read N- to C-terminus: Photosystem I reaction center subunit XII (30 aa).

The chain crosses the membrane as a helical span at residues 7–29 (IYTVLCIALLAGILAIRLGSTLY).

The protein belongs to the PsaM family.

Its subcellular location is the plastid. The protein localises to the chloroplast thylakoid membrane. In Phaeodactylum tricornutum (strain CCAP 1055/1), this protein is Photosystem I reaction center subunit XII.